Reading from the N-terminus, the 753-residue chain is Polyadenylate-binding protein, cytoplasmic and nuclear (753 aa).

Residues M1–A26 are compositionally biased toward polar residues. The interval M1–A52 is disordered. Residues S37–A52 show a composition bias toward low complexity. RRM domains lie at A52–R130, G140–S217, T233–K310, and V336–R460. 2 disordered regions span residues V367 to K417 and M602 to V645. Over residues E379–K417 the composition is skewed to basic and acidic residues. Positions G605–G631 are enriched in gly residues. Residues T648–K725 form the PABC domain. The segment at G728–S753 is disordered. The span at A737 to S753 shows a compositional bias: basic and acidic residues.

This sequence belongs to the polyadenylate-binding protein type-1 family.

The protein resides in the cytoplasm. Its subcellular location is the nucleus. Functionally, binds the poly(A) tail of mRNA. Appears to be an important mediator of the multiple roles of the poly(A) tail in mRNA biogenesis, stability and translation. In the nucleus, involved in both mRNA cleavage and polyadenylation. Is also required for efficient mRNA export to the cytoplasm. Acts in concert with a poly(A)-specific nuclease (PAN) to affect poly(A) tail shortening, which may occur concomitantly with either nucleocytoplasmic mRNA transport or translational initiation. In the cytoplasm, stimulates translation initiation and regulates mRNA decay through translation termination-coupled poly(A) shortening, probably mediated by PAN. This Aspergillus fumigatus (strain ATCC MYA-4609 / CBS 101355 / FGSC A1100 / Af293) (Neosartorya fumigata) protein is Polyadenylate-binding protein, cytoplasmic and nuclear (pab1).